A 76-amino-acid chain; its full sequence is Protein OPG128 (76 aa).

Residues C17 and C21 are joined by a disulfide bond.

Belongs to the orthopoxvirus OPG128 family. Interacts with sulfhydryl oxidase OPG072; this interaction involves formation of a transient disulfide-bonded intermediate, allowing disulfide bond transfer. Interacts with OPG088; this interaction involves formation of a transient disulfide-bonded intermediate, allowing disulfide bond transfer.

Its function is as follows. Late protein which probably participates in disulfide bond formation by functioning as a thiol-disulfide transfer protein between membrane-associated OPG072 and OPG08. The complete pathway for formation of disulfide bonds in intracellular virion membrane proteins sequentially involves oxidation of OPG072, OPG128 and OPG08. The chain is Protein OPG128 (OPG128) from Homo sapiens (Human).